Consider the following 772-residue polypeptide: 5-methyltetrahydropteroyltriglutamate--homocysteine methyltransferase (772 aa).

Residues 24-27 and lysine 120 each bind 5-methyltetrahydropteroyltri-L-glutamate; that span reads RELK. The disordered stretch occupies residues 404 to 428; sequence DPAVRSRTAATTDADARRSGPYPER. L-homocysteine contacts are provided by residues 446–448 and glutamate 499; that span reads IGS. L-methionine contacts are provided by residues 446 to 448 and glutamate 499; that span reads IGS. Residue tryptophan 576 coordinates 5-methyltetrahydropteroyltri-L-glutamate. Aspartate 614 lines the L-homocysteine pocket. Aspartate 614 provides a ligand contact to L-methionine. Glutamate 620 lines the 5-methyltetrahydropteroyltri-L-glutamate pocket. Residues histidine 656, cysteine 658, and glutamate 680 each contribute to the Zn(2+) site. Residue histidine 709 is the Proton donor of the active site. Cysteine 741 lines the Zn(2+) pocket.

This sequence belongs to the vitamin-B12 independent methionine synthase family. Zn(2+) serves as cofactor.

It catalyses the reaction 5-methyltetrahydropteroyltri-L-glutamate + L-homocysteine = tetrahydropteroyltri-L-glutamate + L-methionine. It functions in the pathway amino-acid biosynthesis; L-methionine biosynthesis via de novo pathway; L-methionine from L-homocysteine (MetE route): step 1/1. Catalyzes the transfer of a methyl group from 5-methyltetrahydrofolate to homocysteine resulting in methionine formation. This Streptomyces avermitilis (strain ATCC 31267 / DSM 46492 / JCM 5070 / NBRC 14893 / NCIMB 12804 / NRRL 8165 / MA-4680) protein is 5-methyltetrahydropteroyltriglutamate--homocysteine methyltransferase.